We begin with the raw amino-acid sequence, 382 residues long: Gap junction alpha-1 protein (382 aa).

Topologically, residues 2 to 23 are cytoplasmic; it reads GDWSALGKLLDKVQAYSTAGGK. Position 5 is a phosphoserine (Ser-5). The helical transmembrane segment at 24 to 44 threads the bilayer; sequence VWLSVLFIFRILLLGTAVESA. The Extracellular portion of the chain corresponds to 45-76; it reads WGDEQSAFRCNTQQPGCENVCYDKSFPISHVR. 2 disulfide bridges follow: Cys-54–Cys-192 and Cys-187–Cys-198. A helical membrane pass occupies residues 77-97; that stretch reads FWVLQIIFVSVPTLLYLAHVF. Over 98 to 155 the chain is Cytoplasmic; that stretch reads YVMRKEEKLNKKEEELKVAQTDGVNVEMHLKQIEIKKFKYGIEEHGKVKMRGGLLRTY. Lys-144 is covalently cross-linked (Glycyl lysine isopeptide (Lys-Gly) (interchain with G-Cter in SUMO)). Residues 156-176 form a helical membrane-spanning segment; sequence IISILFKSVFEVAFLLIQWYI. At 177–207 the chain is on the extracellular side; sequence YGFSLSAVYTCKRDPCPHQVDCFLSRPTEKT. The helical transmembrane segment at 208–228 threads the bilayer; it reads IFIIFMLVVSLVSLALNIIEL. Residues 229–382 are Cytoplasmic-facing; sequence FYVFFKGVKD…SRPRPDDLEI (154 aa). A Glycyl lysine isopeptide (Lys-Gly) (interchain with G-Cter in SUMO) cross-link involves residue Lys-237. Positions 244–382 are interaction with NOV; the sequence is SDPYHATTGP…SRPRPDDLEI (139 aa). At Tyr-247 the chain carries Phosphotyrosine. Ser-255, Ser-257, and Ser-262 each carry phosphoserine. The interval 264–382 is interaction with UBQLN4; it reads KYAYFNGCSS…SRPRPDDLEI (119 aa). Cys-271 carries the S-nitrosocysteine modification. A Phosphothreonine modification is found at Thr-275. A phosphoserine mark is found at Ser-306 and Ser-314. Positions 317–332 are enriched in polar residues; sequence QNRMGQAGSTISNSHA. A disordered region spans residues 317-382; sequence QNRMGQAGST…SRPRPDDLEI (66 aa). Ser-325 carries the post-translational modification Phosphoserine; by CK1. Thr-326 bears the Phosphothreonine mark. 2 positions are modified to phosphoserine; by CK1: Ser-328 and Ser-330. 2 positions are modified to phosphoserine: Ser-344 and Ser-365. Positions 362–374 are enriched in low complexity; sequence RPSSRASSRASSR. Phosphoserine; by PKC/PRKCG and PKC/PRKCD is present on Ser-368. Residues Ser-369 and Ser-373 each carry the phosphoserine modification.

This sequence belongs to the connexin family. Alpha-type (group II) subfamily. In terms of assembly, a connexon is composed of a hexamer of connexins. Interacts with SGSM3. Interacts with RIC1/CIP150. Interacts with CNST and CSNK1D. Interacts (via C-terminus) with TJP1. Interacts (via C-terminus) with SRC (via SH3 domain). Interacts (not ubiquitinated) with UBQLN4 (via UBA domain). Interacts with NOV. Interacts with TMEM65. Interacts with ANK3/ANKG and PKP2. Phosphorylation at Ser-325, Ser-328 and Ser-330 by CK1 modulates gap junction assembly. Phosphorylated at Ser-368 by PRKCG; phosphorylation induces disassembly of gap junction plaques and inhibition of gap junction activity. Phosphorylation at Ser-368 by PRKCD triggers its internalization into small vesicles leading to proteasome-mediated degradation. In terms of processing, sumoylated with SUMO1, SUMO2 and SUMO3, which may regulate the level of functional Cx43 gap junctions at the plasma membrane. May be desumoylated by SENP1 or SENP2. Post-translationally, S-nitrosylation at Cys-271 is enriched at the muscle endothelial gap junction in arteries, it augments channel permeability and may regulate of smooth muscle cell to endothelial cell communication. Acetylated in the developing cortex; leading to delocalization from the cell membrane.

Its subcellular location is the cell membrane. The protein resides in the cell junction. It is found in the gap junction. The protein localises to the endoplasmic reticulum. Its function is as follows. Gap junction protein that acts as a regulator of bladder capacity. A gap junction consists of a cluster of closely packed pairs of transmembrane channels, the connexons, through which materials of low MW diffuse from one cell to a neighboring cell. May play a critical role in the physiology of hearing by participating in the recycling of potassium to the cochlear endolymph. Negative regulator of bladder functional capacity: acts by enhancing intercellular electrical and chemical transmission, thus sensitizing bladder muscles to cholinergic neural stimuli and causing them to contract. May play a role in cell growth inhibition through the regulation of NOV expression and localization. Plays an essential role in gap junction communication in the ventricles. The protein is Gap junction alpha-1 protein (GJA1) of Oryctolagus cuniculus (Rabbit).